A 503-amino-acid polypeptide reads, in one-letter code: Glutamate--tRNA ligase (503 aa).

The 'HIGH' region signature appears at 9-19; it reads PSPTGDPHVGT. The 'KMSKS' region signature appears at 251-255; sequence KLSKR. Lys254 contributes to the ATP binding site.

The protein belongs to the class-I aminoacyl-tRNA synthetase family. Glutamate--tRNA ligase type 1 subfamily. Monomer.

It localises to the cytoplasm. The catalysed reaction is tRNA(Glu) + L-glutamate + ATP = L-glutamyl-tRNA(Glu) + AMP + diphosphate. In terms of biological role, catalyzes the attachment of glutamate to tRNA(Glu) in a two-step reaction: glutamate is first activated by ATP to form Glu-AMP and then transferred to the acceptor end of tRNA(Glu). This Saccharophagus degradans (strain 2-40 / ATCC 43961 / DSM 17024) protein is Glutamate--tRNA ligase.